Here is an 80-residue protein sequence, read N- to C-terminus: Metallothionein-like protein BIF98 (80 aa).

Belongs to the metallothionein superfamily. Type 15 family.

Functionally, metallothioneins have a high content of cysteine residues that bind various heavy metals. This Brassica rapa subsp. pekinensis (Chinese cabbage) protein is Metallothionein-like protein BIF98.